Here is a 159-residue protein sequence, read N- to C-terminus: Small ribosomal subunit protein uS17x (159 aa).

It belongs to the universal ribosomal protein uS17 family.

It is found in the cytoplasm. This Arabidopsis thaliana (Mouse-ear cress) protein is Small ribosomal subunit protein uS17x (RPS11C).